A 1059-amino-acid chain; its full sequence is Mitogen-activated protein kinase kinase kinase mlk-1 (1059 aa).

The interval 1–66 (MEQASVPSYV…ESSQVSRESP (66 aa)) is disordered. Residues 38–48 (DTTTASTSTDS) are compositionally biased toward low complexity. The SH3 domain maps to 69–130 (RASKAFVASY…PSNYAREVTY (62 aa)). The 305-residue stretch at 150 to 454 (TLSDCQIGHG…TLAISFKQYA (305 aa)) folds into the Protein kinase domain. ATP contacts are provided by residues 156–164 (IGHGATATV) and Lys193. Positions 199-224 (ASNFRADVVSTDEQLEQLKREANLVN) form a coiled coil. The active-site Proton acceptor is Asp297. A Phosphoserine; by max-2 and tpa-1 modification is found at Ser355. Disordered stretches follow at residues 617–699 (PVVS…QTTR) and 714–808 (RAQS…SSSD). Over residues 623–633 (MDDSNTFSTID) the composition is skewed to polar residues. Composition is skewed to basic and acidic residues over residues 639 to 648 (DPNHSKESKK) and 662 to 674 (NKRDSKEDHDERA). Residues 678–689 (SISSRSSSTTSS) show a composition bias toward low complexity. Positions 690–699 (NRLITGQTTR) are enriched in polar residues. Positions 749-759 (RYVKDLEKDTP) are enriched in basic and acidic residues. Polar residues-rich tracts occupy residues 774 to 790 (LDQTIPASPNSPDSINN) and 798 to 808 (SRRTTANSSSD). The NPQY motif signature appears at 937–940 (NPQY). Residue Tyr940 is modified to Phosphotyrosine.

This sequence belongs to the protein kinase superfamily. STE Ser/Thr protein kinase family. MAP kinase kinase kinase subfamily. In terms of assembly, interacts with max-2; the interaction is independent of max-2 and mlk-1 kinase activities. May interact (via NPQY motif when phosphorylated on tyrosine residue) with shc-1 (via PID domain); the interaction may facilitate mek-1 phosphorylation by bringing mlk-1 and mek-1 together. Interacts with svh-2 (via cytoplasmic domain). Interacts with tpa-1. The cofactor is Mg(2+). Post-translationally, may be phosphorylated on tyrosine residues by svh-2. In terms of processing, may be ubiquitinated and targeted for proteasomal degradation by E3 ubiquitin ligase rpm-1. Expressed in pharynx, intestine, hypodermis, neurons and body muscles.

The enzyme catalyses L-seryl-[protein] + ATP = O-phospho-L-seryl-[protein] + ADP + H(+). It carries out the reaction L-threonyl-[protein] + ATP = O-phospho-L-threonyl-[protein] + ADP + H(+). Activated by phosphorylation at Ser-355. May be activated by svh-2-mediated phosphorylation. Its function is as follows. Serine/threonine-protein kinase which, by phosphorylating and activating mek-1, plays an important role in the activation of the JNK pathway composed of mlk-1, mek-1 and kgb-1. Involved in the response to environmental stress such as heavy metals. By activating the JNK pathway downstream of tyrosine receptor svh-2, plays a role in axon regeneration after injury. In Caenorhabditis elegans, this protein is Mitogen-activated protein kinase kinase kinase mlk-1.